The sequence spans 270 residues: MAKMTSRQLANELKSRLTNDNWSHQFDREKDTLRIEDKQTGKGITLELPPIIAKWEVKPDETLDEIVYYVKEALSAMKGEAQHISGKEKQIYPVIRSTSFPEASSDGIPLVFDEHTAETRIYYALDLGSTYRLIDEKMLQKENWTKERIRETASFNVRSLETVVKMDEVAGNRFYFFRANDGYDASRLLNESILQEYAQKIEGQMAISVPHQDVFIIADVCNESGYDILGQMSMSFFASGTVPITALSFLYDEGKLEPIFILAKSRPKQQ.

This sequence belongs to the UPF0354 family.

This Bacillus pumilus (strain SAFR-032) protein is UPF0354 protein BPUM_2629.